A 400-amino-acid polypeptide reads, in one-letter code: Argininosuccinate synthase (400 aa).

10-18 (AFSGGLDTT) serves as a coordination point for ATP. An L-citrulline-binding site is contributed by Tyr87. Residue Gly117 coordinates ATP. L-aspartate-binding residues include Thr119, Asn123, and Asp124. Asn123 contributes to the L-citrulline binding site. L-citrulline is bound by residues Arg127, Ser173, Ser182, Glu255, and Tyr267.

The protein belongs to the argininosuccinate synthase family. Type 1 subfamily. As to quaternary structure, homotetramer.

The protein resides in the cytoplasm. The enzyme catalyses L-citrulline + L-aspartate + ATP = 2-(N(omega)-L-arginino)succinate + AMP + diphosphate + H(+). It functions in the pathway amino-acid biosynthesis; L-arginine biosynthesis; L-arginine from L-ornithine and carbamoyl phosphate: step 2/3. This is Argininosuccinate synthase from Natronomonas pharaonis (strain ATCC 35678 / DSM 2160 / CIP 103997 / JCM 8858 / NBRC 14720 / NCIMB 2260 / Gabara) (Halobacterium pharaonis).